The primary structure comprises 109 residues: Guanylate cyclase activator 2B (109 aa).

A signal peptide spans 1–23; the sequence is MKVLALPVAVAAMLLVLAQNTQS. The propeptide occupies 24-94; sequence VYIQYEGFQV…NIFRALRSIS (71 aa). 3 cysteine pairs are disulfide-bonded: C65–C78, C98–C106, and C101–C109.

Belongs to the guanylin family. As to expression, small and large intestine and atria and ventricles of heart. Both uroguanylin and prouroguanylin are found in plasma.

It is found in the secreted. Functionally, endogenous activator of intestinal guanylate cyclase. It stimulates this enzyme through the same receptor binding region as the heat-stable enterotoxins. May be a potent physiological regulator of intestinal fluid and electrolyte transport. May be an autocrine/paracrine regulator of intestinal salt and water transport. The sequence is that of Guanylate cyclase activator 2B (GUCA2B) from Didelphis virginiana (North American opossum).